A 98-amino-acid chain; its full sequence is MPRIVNPLDEMLFKEVLKEQQRIRVYIEKARYGKLKTIIEGIDEKEFDLEDIAKKLKAKLACGGTVKKGRIELQGDHREKVKKLLADLGFSEDLIEIE.

It belongs to the SUI1 family.

The protein is Protein translation factor SUI1 homolog of Thermococcus onnurineus (strain NA1).